The following is a 520-amino-acid chain: 2-isopropylmalate synthase (520 aa).

Residues 12–274 (VIIFDTTLRD…WNKIDTTQLT (263 aa)) enclose the Pyruvate carboxyltransferase domain. Mn(2+) is bound by residues D21, H209, H211, and N245. The segment at 398–520 (KLTSLTVIAG…RDTVTTAAAS (123 aa)) is regulatory domain.

This sequence belongs to the alpha-IPM synthase/homocitrate synthase family. LeuA type 1 subfamily. Homodimer. Mn(2+) is required as a cofactor.

Its subcellular location is the cytoplasm. It catalyses the reaction 3-methyl-2-oxobutanoate + acetyl-CoA + H2O = (2S)-2-isopropylmalate + CoA + H(+). Its pathway is amino-acid biosynthesis; L-leucine biosynthesis; L-leucine from 3-methyl-2-oxobutanoate: step 1/4. In terms of biological role, catalyzes the condensation of the acetyl group of acetyl-CoA with 3-methyl-2-oxobutanoate (2-ketoisovalerate) to form 3-carboxy-3-hydroxy-4-methylpentanoate (2-isopropylmalate). The protein is 2-isopropylmalate synthase of Bradyrhizobium diazoefficiens (strain JCM 10833 / BCRC 13528 / IAM 13628 / NBRC 14792 / USDA 110).